Reading from the N-terminus, the 469-residue chain is DNA-binding transcriptional regulator NtrC (469 aa).

The Response regulatory domain maps to 5-119; that stretch reads IVWVVDDDSS…EAVALVERAI (115 aa). Aspartate 54 carries the 4-aspartylphosphate modification. Positions 140–369 constitute a Sigma-54 factor interaction domain; it reads MIGEAPAMQD…LENTCRWLTV (230 aa). ATP is bound by residues 168 to 175 and 231 to 240; these read GESGTGKE and ADGGTLFLDE. Residues 445 to 464 constitute a DNA-binding region (H-T-H motif); the sequence is KQEAARLLGWGRNTLTRKLK.

In terms of processing, phosphorylated and dephosphorylated by NtrB.

The protein localises to the cytoplasm. In terms of biological role, member of the two-component regulatory system NtrB/NtrC, which controls expression of the nitrogen-regulated (ntr) genes in response to nitrogen limitation. Phosphorylated NtrC binds directly to DNA and stimulates the formation of open promoter-sigma54-RNA polymerase complexes. The sequence is that of DNA-binding transcriptional regulator NtrC (glnG) from Salmonella typhimurium (strain LT2 / SGSC1412 / ATCC 700720).